A 1304-amino-acid polypeptide reads, in one-letter code: Angiotensin-converting enzyme (1304 aa).

An N-terminal signal peptide occupies residues 1–27 (MGAASGRRGPGLLLPLLLLLPPQPALA). The Extracellular portion of the chain corresponds to 28–1257 (LDPGLQPGNF…LDAQQARVGQ (1230 aa)). Asn36, Asn52, Asn72, Asn109, Asn144, and Asn158 each carry an N-linked (GlcNAc...) asparagine glycan. Peptidase M2 domains lie at 38–622 (SADE…LGWP) and 641–1220 (VTDE…LGWP). Cys155 and Cys163 are oxidised to a cystine. Residue Tyr229 participates in chloride binding. Residue Asn316 is glycosylated (N-linked (GlcNAc...) asparagine). Residues Cys357 and Cys375 are joined by a disulfide bond. His388 is a binding site for Zn(2+). Glu389 serves as the catalytic Proton acceptor 1. His392 and Glu416 together coordinate Zn(2+). N-linked (GlcNAc...) asparagine glycans are attached at residues Asn440, Asn443, and Asn507. His518 functions as the Proton donor 1 in the catalytic mechanism. Arg527 serves as a coordination point for chloride. Residues Cys543 and Cys555 are joined by a disulfide bond. Residue Asn675 is glycosylated (N-linked (GlcNAc...) asparagine). N-linked (GlcNAc...) (complex) asparagine glycans are attached at residues Asn693 and Asn712. Cys755 and Cys761 form a disulfide bridge. N-linked (GlcNAc...) asparagine glycosylation occurs at Asn758. Chloride contacts are provided by Arg789 and Tyr827. An N-linked (GlcNAc...) asparagine glycan is attached at Asn940. Residues Cys955 and Cys973 are joined by a disulfide bond. His986 lines the Zn(2+) pocket. The Proton acceptor 2 role is filled by Glu987. Residues His990 and Glu1014 each coordinate Zn(2+). Chloride is bound by residues Trp1088 and Arg1092. His1116 serves as the catalytic Proton donor 2. Residue Arg1125 participates in chloride binding. Cys1141 and Cys1153 form a disulfide bridge. Residue Asn1189 is glycosylated (N-linked (GlcNAc...) asparagine). The segment at 1213-1254 (HGEKLGWPQYNWTPNSARSEGPLPDSGRVSFLGLDLDAQQAR) is juxtamembrane stalk. Residues 1258–1274 (WLLLFLGIALLVATLGL) traverse the membrane as a helical segment. Residues 1275 to 1304 (SQRLFSIRHRSLHRHSHGPQFDSEVELRHS) lie on the Cytoplasmic side of the membrane. At Ser1297 the chain carries Phosphoserine.

Belongs to the peptidase M2 family. Monomer and homodimer; homodimerizes following binding to an inhibitor. Interacts with calmodulin (CALM1, CALM2 or CALM3); interaction takes place in the cytoplasmic region and regulates phosphorylation and proteolytic cleavage. Zn(2+) serves as cofactor. The cofactor is chloride. Produced following proteolytic cleavage by secretase enzymes that cleave the transmembrane form in the juxtamembrane stalk region upstream of the transmembrane region. Cleavage can take place at different sites of the juxtamembrane stalk region. In terms of processing, phosphorylated by CK2 on Ser-1297; which allows membrane retention. Phosphorylated on tyrosine residues on its extracellular part, promoting cleavage by secretase enzymes and formation of the soluble form (Angiotensin-converting enzyme, soluble form).

The protein localises to the cell membrane. The protein resides in the cytoplasm. It is found in the secreted. The enzyme catalyses Release of a C-terminal dipeptide, oligopeptide-|-Xaa-Yaa, when Xaa is not Pro, and Yaa is neither Asp nor Glu. Thus, conversion of angiotensin I to angiotensin II, with increase in vasoconstrictor activity, but no action on angiotensin II.. The catalysed reaction is angiotensin I + H2O = L-histidyl-L-leucine + angiotensin II. It catalyses the reaction bradykinin + H2O = L-Phe-L-Arg + bradykinin(1-7). It carries out the reaction substance P + H2O = substance P(1-9) + L-Leu-L-Met-NH2. The enzyme catalyses substance P + H2O = substance P(1-8) + Gly-L-Leu-L-Met-NH2. The catalysed reaction is substance P + H2O = L-Phe-L-Phe-Gly-L-Leu-L-Met-NH2 + substance P(1-6). It catalyses the reaction neurotensin + H2O = neurotensin(1-11) + L-isoleucyl-L-leucine. It carries out the reaction goralatide + H2O = N-acetyl-L-seryl-L-aspartate + L-lysyl-L-proline. The enzyme catalyses Met-enkephalin + H2O = L-phenylalanyl-L-methionine + L-tyrosylglycylglycine. The catalysed reaction is Leu-enkephalin + H2O = L-tyrosylglycylglycine + L-phenylalanyl-L-leucine. It catalyses the reaction Met-enkephalin-Arg-Phe + H2O = L-arginyl-L-phenylalanine + Met-enkephalin. The dipeptidyl carboxypeptidase activity is strongly activated by chloride. The dipeptidyl carboxypeptidase activity is specifically inhibited by lisinopril, captopril and enalaprilat. With respect to regulation, strongly inhibited by lisinopril and captopril. Dipeptidyl carboxypeptidase that removes dipeptides from the C-terminus of a variety of circulating hormones, such as angiotensin I, bradykinin or enkephalins, thereby playing a key role in the regulation of blood pressure, electrolyte homeostasis or synaptic plasticity. Composed of two similar catalytic domains, each possessing a functional active site, with different selectivity for substrates. Plays a major role in the angiotensin-renin system that regulates blood pressure and sodium retention by the kidney by converting angiotensin I to angiotensin II, resulting in an increase of the vasoconstrictor activity of angiotensin. Also able to inactivate bradykinin, a potent vasodilator, and therefore enhance the blood pressure response. Acts as a regulator of synaptic transmission by mediating cleavage of neuropeptide hormones, such as substance P, neurotensin or enkephalins. Catalyzes degradation of different enkephalin neuropeptides (Met-enkephalin, Leu-enkephalin, Met-enkephalin-Arg-Phe and possibly Met-enkephalin-Arg-Gly-Leu). Acts as a regulator of synaptic plasticity in the nucleus accumbens of the brain by mediating cleavage of Met-enkephalin-Arg-Phe, a strong ligand of Mu-type opioid receptor OPRM1, into Met-enkephalin. Met-enkephalin-Arg-Phe cleavage by ACE decreases activation of OPRM1, leading to long-term synaptic potentiation of glutamate release. Also acts as a regulator of hematopoietic stem cell differentiation by mediating degradation of hemoregulatory peptide N-acetyl-SDKP (AcSDKP). Acts as a regulator of cannabinoid signaling pathway by mediating degradation of hemopressin, an antagonist peptide of the cannabinoid receptor CNR1. Involved in amyloid-beta metabolism by catalyzing degradation of Amyloid-beta protein 40 and Amyloid-beta protein 42 peptides, thereby preventing plaque formation. Catalyzes cleavage of cholecystokinin (maturation of Cholecystokinin-8 and Cholecystokinin-5) and Gonadoliberin-1 (both maturation and degradation) hormones. Degradation of hemoregulatory peptide N-acetyl-SDKP (AcSDKP) and amyloid-beta proteins is mediated by the N-terminal catalytic domain, while angiotensin I and cholecystokinin cleavage is mediated by the C-terminal catalytic region. In terms of biological role, soluble form that is released in blood plasma and other body fluids following proteolytic cleavage in the juxtamembrane stalk region. Its function is as follows. Isoform produced by alternative promoter usage that is specifically expressed in spermatocytes and adult testis, and which is required for male fertility. In contrast to somatic isoforms, only contains one catalytic domain. Acts as a dipeptidyl carboxypeptidase that removes dipeptides from the C-terminus of substrates. The identity of substrates that are needed for male fertility is unknown. May also have a glycosidase activity which releases GPI-anchored proteins from the membrane by cleaving the mannose linkage in the GPI moiety. The GPIase activity was reported to be essential for the egg-binding ability of the sperm. This activity is however unclear and has been challenged by other groups, suggesting that it may be indirect. This Pan troglodytes (Chimpanzee) protein is Angiotensin-converting enzyme.